Reading from the N-terminus, the 209-residue chain is Large ribosomal subunit protein uL3 (209 aa).

The segment at 122–152 (AIKRHGQSRGPMSHGSRYHRRPGSMGPVDPN) is disordered.

The protein belongs to the universal ribosomal protein uL3 family. In terms of assembly, part of the 50S ribosomal subunit. Forms a cluster with proteins L14 and L19. Interacts with RNA helicase CshA.

In terms of biological role, one of the primary rRNA binding proteins, it binds directly near the 3'-end of the 23S rRNA, where it nucleates assembly of the 50S subunit. Strongly stimulates 23S rRNA precursor processing by mini-ribonuclease 3 (MrnC); 20-30% DMSO can replace L3, suggesting the protein may alter rRNA conformation. The sequence is that of Large ribosomal subunit protein uL3 from Bacillus subtilis (strain 168).